A 147-amino-acid polypeptide reads, in one-letter code: HTH-type transcriptional regulator MgrA (147 aa).

The HTH marR-type domain maps to 8–139 (KEQLCFSLYN…LNRLLGKVIH (132 aa)). A DNA-binding region (H-T-H motif) is located at residues 55–78 (VKKVVTELALDTGTVSPLLKRMEQ).

It localises to the cytoplasm. Functionally, regulatory protein involved in autolytic activity, multidrug resistance and virulence. Controls autolysis by inactivating LytM, LytN (autolysins) and SarV (autolysis activator) and activating ArlRS, LrgAB and LytSR (autolysis inhibitors). Acts as a dual regulator for resistance to multiple drugs by inactivating NorB and tet38 and activating NorA. Positively controls the expression of virulence accessory gene regulator (agr) to promote alpha-hemolysin (hla) transcription and down-regulates staphylococcal accessory regulator (sarS), leading to repression of surface protein A (spa). Binds directly to hla promoter to augment its activation. Binds to sarS promoter to down-regulate spa expression. The protein is HTH-type transcriptional regulator MgrA (mgrA) of Staphylococcus aureus (strain NCTC 8325 / PS 47).